Here is a 216-residue protein sequence, read N- to C-terminus: Pyridoxine/pyridoxamine 5'-phosphate oxidase 1 (216 aa).

Substrate contacts are provided by residues 10 to 13 (RREY) and Lys68. FMN is bound by residues 63–68 (RIVLLK), 78–79 (YT), Lys85, and Gln107. Substrate-binding residues include Tyr125, Arg129, and Ser133. FMN contacts are provided by residues 142 to 143 (QS) and Trp186. 192-194 (RLH) serves as a coordination point for substrate. Arg196 contributes to the FMN binding site.

The protein belongs to the pyridoxamine 5'-phosphate oxidase family. As to quaternary structure, homodimer. Requires FMN as cofactor.

The enzyme catalyses pyridoxamine 5'-phosphate + O2 + H2O = pyridoxal 5'-phosphate + H2O2 + NH4(+). The catalysed reaction is pyridoxine 5'-phosphate + O2 = pyridoxal 5'-phosphate + H2O2. Its pathway is cofactor metabolism; pyridoxal 5'-phosphate salvage; pyridoxal 5'-phosphate from pyridoxamine 5'-phosphate: step 1/1. It functions in the pathway cofactor metabolism; pyridoxal 5'-phosphate salvage; pyridoxal 5'-phosphate from pyridoxine 5'-phosphate: step 1/1. Catalyzes the oxidation of either pyridoxine 5'-phosphate (PNP) or pyridoxamine 5'-phosphate (PMP) into pyridoxal 5'-phosphate (PLP). In Hydrogenovibrio crunogenus (strain DSM 25203 / XCL-2) (Thiomicrospira crunogena), this protein is Pyridoxine/pyridoxamine 5'-phosphate oxidase 1.